A 296-amino-acid chain; its full sequence is tRNA dimethylallyltransferase (296 aa).

11 to 18 serves as a coordination point for ATP; sequence GPTAVGKT. 13 to 18 lines the substrate pocket; that stretch reads TAVGKT. The interval 36 to 39 is interaction with substrate tRNA; that stretch reads DSQQ.

This sequence belongs to the IPP transferase family. As to quaternary structure, monomer. It depends on Mg(2+) as a cofactor.

It carries out the reaction adenosine(37) in tRNA + dimethylallyl diphosphate = N(6)-dimethylallyladenosine(37) in tRNA + diphosphate. Catalyzes the transfer of a dimethylallyl group onto the adenine at position 37 in tRNAs that read codons beginning with uridine, leading to the formation of N6-(dimethylallyl)adenosine (i(6)A). This Streptococcus agalactiae serotype III (strain NEM316) protein is tRNA dimethylallyltransferase.